We begin with the raw amino-acid sequence, 565 residues long: Pentatricopeptide repeat-containing protein At3g20730 (565 aa).

14 PPR repeats span residues 12–46 (SPSL…GFCS), 47–77 (NLQL…ISKR), 78–112 (DVVS…DVKA), 113–147 (NQFT…NCAG), 148–178 (NLIV…MKER), 179–213 (DLVS…GKKP), 214–248 (DCFT…GFGR), 249–279 (SSAL…TKKR), 280–315 (DLLS…KTKM), 316–351 (DEVV…QIRF), 352–382 (DVAL…MKEK), 383–417 (DVRS…RIKP), 418–448 (NDVT…MINK), and 454–484 (REEH…KEGI). The tract at residues 491 to 565 (TWGAFLDACR…NKAPGYSLVY (75 aa)) is type E motif; degenerate.

This sequence belongs to the PPR family. PCMP-E subfamily.

The sequence is that of Pentatricopeptide repeat-containing protein At3g20730 (PCMP-E94) from Arabidopsis thaliana (Mouse-ear cress).